The primary structure comprises 265 residues: Putative 2-aminoethylphosphonate transport system permease protein PhnV (265 aa).

Transmembrane regions (helical) follow at residues 13–33 (GVVASVLFIVFFFLPLAVILM), 69–89 (LTIGFCASLFALLCGVWAALA), 104–124 (VFYLPSAIPSVSVGLGILVAF), 131–151 (MNGTLWIVLTAHFVLISAFTF), 185–205 (LPLLMPWMMSALALSLSLSMG), and 233–253 (NIADGAALTIVLVAITLLLMM). Positions 65 to 253 (LLASLTIGFC…LVAITLLLMM (189 aa)) constitute an ABC transmembrane type-1 domain.

The protein belongs to the binding-protein-dependent transport system permease family.

It localises to the cell inner membrane. In terms of biological role, probably part of the PhnSTUV complex (TC 3.A.1.11.5) involved in 2-aminoethylphosphonate import. Probably responsible for the translocation of the substrate across the membrane. The sequence is that of Putative 2-aminoethylphosphonate transport system permease protein PhnV (phnV) from Salmonella choleraesuis (strain SC-B67).